Here is a 380-residue protein sequence, read N- to C-terminus: Hydrogenase maturation factor HypD2 (380 aa).

The Fe cation site is built by C36, C64, and C67.

Belongs to the HypD family. Requires [4Fe-4S] cluster as cofactor.

It participates in protein modification; [NiFe] hydrogenase maturation. Involved in the maturation of [NiFe] hydrogenases. Involved in the biosynthesis of the Fe(CN)(2)CO cofactor. This is Hydrogenase maturation factor HypD2 (hypD2) from Bradyrhizobium diazoefficiens (strain JCM 10833 / BCRC 13528 / IAM 13628 / NBRC 14792 / USDA 110).